The chain runs to 108 residues: Insulin-1 (108 aa).

A signal peptide spans 1–24 (MALLVHFLPLLALLALWEPKPTQA). Disulfide bonds link cysteine 31/cysteine 94, cysteine 43/cysteine 107, and cysteine 93/cysteine 98. The propeptide at 57-85 (EVEDPQVEQLELGGSPGDLQTLALEVARQ) is c peptide.

Belongs to the insulin family. In terms of assembly, heterodimer of a B chain and an A chain linked by two disulfide bonds.

The protein resides in the secreted. In terms of biological role, insulin decreases blood glucose concentration. It increases cell permeability to monosaccharides, amino acids and fatty acids. It accelerates glycolysis, the pentose phosphate cycle, and glycogen synthesis in liver. This Mus musculus (Mouse) protein is Insulin-1 (Ins1).